A 215-amino-acid chain; its full sequence is Adenylate kinase (215 aa).

G10–T15 is a binding site for ATP. Positions S30 to V59 are NMP. Residues T31, R36, G57–V59, G85–R88, and Q92 contribute to the AMP site. The LID stretch occupies residues G122–D159. ATP is bound by residues R123 and V132–Y133. 2 residues coordinate AMP: R156 and R167. G201 contacts ATP.

The protein belongs to the adenylate kinase family. Monomer.

Its subcellular location is the cytoplasm. It catalyses the reaction AMP + ATP = 2 ADP. The protein operates within purine metabolism; AMP biosynthesis via salvage pathway; AMP from ADP: step 1/1. Catalyzes the reversible transfer of the terminal phosphate group between ATP and AMP. Plays an important role in cellular energy homeostasis and in adenine nucleotide metabolism. This is Adenylate kinase from Pseudomonas fluorescens (strain ATCC BAA-477 / NRRL B-23932 / Pf-5).